Here is a 247-residue protein sequence, read N- to C-terminus: Mitochondrial inner membrane protease ATP23 (247 aa).

A disordered region spans residues 1–21 (MSVPPPPKEDLIKPNPPKSES). An a divalent metal cation-binding site is contributed by His-144. Residue Glu-145 is part of the active site. His-148 serves as a coordination point for a divalent metal cation.

The protein belongs to the peptidase M76 family.

Its subcellular location is the mitochondrion inner membrane. In terms of biological role, has a dual role in the assembly of mitochondrial ATPase. Acts as a protease that removes N-terminal residues of mitochondrial ATPase CF(0) subunit 6 at the intermembrane space side. Also involved in the correct assembly of the membrane-embedded ATPase CF(0) particle, probably mediating association of subunit 6 with the subunit 9 ring. The polypeptide is Mitochondrial inner membrane protease ATP23 (ATP23) (Kluyveromyces lactis (strain ATCC 8585 / CBS 2359 / DSM 70799 / NBRC 1267 / NRRL Y-1140 / WM37) (Yeast)).